A 471-amino-acid polypeptide reads, in one-letter code: Major facilitator-type transporter psiT1 (471 aa).

Positions 1–36 (MNPTTATDAHERTSLLSGRPQSAANSTAPYERQVQP) are disordered. The segment covering 14-36 (SLLSGRPQSAANSTAPYERQVQP) has biased composition (polar residues). N25 carries N-linked (GlcNAc...) asparagine glycosylation. A run of 8 helical transmembrane segments spans residues 44–64 (TPVT…TMVI), 108–128 (AIMV…GTGI), 140–160 (PVLM…LTVQ), 168–188 (LVTF…TTVF), 212–232 (GWLV…TTFL), 237–257 (AVYI…AFVL), 322–342 (LHSF…LIFF), and 356–376 (VMTT…PLFI). N384 carries an N-linked (GlcNAc...) asparagine glycan. The helical transmembrane segment at 424-444 (VHITVISWTIESLAYIVLGTV) threads the bilayer.

Belongs to the major facilitator superfamily. TCR/Tet family.

The protein localises to the membrane. Its function is as follows. Major facilitator-type transporter; part of the gene cluster that mediates the biosynthesis of psilocybin, a psychotropic tryptamine-derived natural product. This Psilocybe cyanescens protein is Major facilitator-type transporter psiT1.